The primary structure comprises 345 residues: Methylthioribose-1-phosphate isomerase (345 aa).

Residues 44–46 (RGA), R86, and Q194 each bind substrate. D235 (proton donor) is an active-site residue. 245 to 246 (NK) provides a ligand contact to substrate.

This sequence belongs to the eIF-2B alpha/beta/delta subunits family. MtnA subfamily.

It carries out the reaction 5-(methylsulfanyl)-alpha-D-ribose 1-phosphate = 5-(methylsulfanyl)-D-ribulose 1-phosphate. Its pathway is amino-acid biosynthesis; L-methionine biosynthesis via salvage pathway; L-methionine from S-methyl-5-thio-alpha-D-ribose 1-phosphate: step 1/6. In terms of biological role, catalyzes the interconversion of methylthioribose-1-phosphate (MTR-1-P) into methylthioribulose-1-phosphate (MTRu-1-P). This is Methylthioribose-1-phosphate isomerase from Desulfitobacterium hafniense (strain DSM 10664 / DCB-2).